The sequence spans 254 residues: Thiazole synthase (254 aa).

Lysine 96 functions as the Schiff-base intermediate with DXP in the catalytic mechanism. Residues glycine 157, 183–184, and 205–206 each bind 1-deoxy-D-xylulose 5-phosphate; these read AG and NT.

This sequence belongs to the ThiG family. In terms of assembly, homotetramer. Forms heterodimers with either ThiH or ThiS.

Its subcellular location is the cytoplasm. It catalyses the reaction [ThiS sulfur-carrier protein]-C-terminal-Gly-aminoethanethioate + 2-iminoacetate + 1-deoxy-D-xylulose 5-phosphate = [ThiS sulfur-carrier protein]-C-terminal Gly-Gly + 2-[(2R,5Z)-2-carboxy-4-methylthiazol-5(2H)-ylidene]ethyl phosphate + 2 H2O + H(+). It participates in cofactor biosynthesis; thiamine diphosphate biosynthesis. Its function is as follows. Catalyzes the rearrangement of 1-deoxy-D-xylulose 5-phosphate (DXP) to produce the thiazole phosphate moiety of thiamine. Sulfur is provided by the thiocarboxylate moiety of the carrier protein ThiS. In vitro, sulfur can be provided by H(2)S. The sequence is that of Thiazole synthase from Bacillus velezensis (strain DSM 23117 / BGSC 10A6 / LMG 26770 / FZB42) (Bacillus amyloliquefaciens subsp. plantarum).